The sequence spans 126 residues: Profilin (126 aa).

It belongs to the profilin family. Occurs in many kinds of cells as a complex with monomeric actin in a 1:1 ratio. As to expression, expressed in ovary and head.

It is found in the cytoplasm. The protein resides in the cytoskeleton. Its function is as follows. Binds to actin and affects the structure of the cytoskeleton. At high concentrations, profilin prevents the polymerization of actin, whereas it enhances it at low concentrations. By binding to PIP2, it may inhibit the formation of IP3 and DG. This profilin is required for intercellular cytoplasm transport during Drosophila oogenesis. Function in neurons is essential for adult survival, and is important for climbing behavior and activity. In Drosophila melanogaster (Fruit fly), this protein is Profilin (chic).